Reading from the N-terminus, the 217-residue chain is Dense granule protein 1 (217 aa).

The first 19 residues, 1–19 (MARQATFIVALCVCGLAIA), serve as a signal peptide directing secretion. Over residues 171 to 183 (VASEDSALGNSEE) the composition is skewed to polar residues. The tract at residues 171 to 217 (VASEDSALGNSEEQYVEGTVNGSSDPEQERAGGPLIPEGDEQEVDTE) is disordered. The N-linked (GlcNAc...) asparagine glycan is linked to asparagine 191. Residues 208-217 (EGDEQEVDTE) show a composition bias toward acidic residues.

This sequence belongs to the Gra7 family.

The protein resides in the secreted. The protein is Dense granule protein 1 (DG1) of Neospora caninum (Coccidian parasite).